Here is a 220-residue protein sequence, read N- to C-terminus: Adenylate kinase (220 aa).

G10 to T15 is a binding site for ATP. The NMP stretch occupies residues A30–I59. AMP-binding positions include R36, D57–I59, G83–R86, and Q90. The tract at residues G124–D161 is LID. R125 is a binding site for ATP. Residues C128 and C131 each contribute to the Zn(2+) site. V134–Y135 provides a ligand contact to ATP. Residues C148 and C151 each coordinate Zn(2+). AMP contacts are provided by R158 and R169. ATP is bound at residue G197.

It belongs to the adenylate kinase family. As to quaternary structure, monomer.

The protein resides in the cytoplasm. The catalysed reaction is AMP + ATP = 2 ADP. It functions in the pathway purine metabolism; AMP biosynthesis via salvage pathway; AMP from ADP: step 1/1. Catalyzes the reversible transfer of the terminal phosphate group between ATP and AMP. Plays an important role in cellular energy homeostasis and in adenine nucleotide metabolism. The polypeptide is Adenylate kinase (Pyrococcus abyssi (strain GE5 / Orsay)).